Consider the following 425-residue polypeptide: Serine--tRNA ligase (425 aa).

L-serine is bound at residue 228-230; it reads TAE. 259 to 261 contacts ATP; sequence RSE. Residue Glu-282 participates in L-serine binding. Residue 346 to 349 coordinates ATP; it reads EIAS. Ser-382 lines the L-serine pocket.

Belongs to the class-II aminoacyl-tRNA synthetase family. Type-1 seryl-tRNA synthetase subfamily. Homodimer. The tRNA molecule binds across the dimer.

Its subcellular location is the cytoplasm. It catalyses the reaction tRNA(Ser) + L-serine + ATP = L-seryl-tRNA(Ser) + AMP + diphosphate + H(+). The enzyme catalyses tRNA(Sec) + L-serine + ATP = L-seryl-tRNA(Sec) + AMP + diphosphate + H(+). It participates in aminoacyl-tRNA biosynthesis; selenocysteinyl-tRNA(Sec) biosynthesis; L-seryl-tRNA(Sec) from L-serine and tRNA(Sec): step 1/1. Functionally, catalyzes the attachment of serine to tRNA(Ser). Is also able to aminoacylate tRNA(Sec) with serine, to form the misacylated tRNA L-seryl-tRNA(Sec), which will be further converted into selenocysteinyl-tRNA(Sec). In Rickettsia rickettsii (strain Iowa), this protein is Serine--tRNA ligase.